The following is a 513-amino-acid chain: HTH-type transcriptional regulatory protein TyrR (513 aa).

One can recognise an ACT domain in the interval 2–72 (RLEVFCEDRL…GVTDVRTVPW (71 aa)). One can recognise a PAS domain in the interval 78-114 (EHLALSALLEALPEPVLSVDMKSKVDMANPASCQLFG). The Sigma-54 factor interaction domain occupies 206–428 (IVAVSPKMKH…LKNAIYRALT (223 aa)). ATP-binding positions include 234 to 241 (GDTGTGKD) and 290 to 299 (ANGGSVLLDE). Residues 482 to 502 (STRKLAKRLGVSHTAIANKLR) constitute a DNA-binding region (H-T-H motif).

As to quaternary structure, homodimer. In presence of tyrosine (or high concentrations of phenylalanine or tryptophan) and ATP, it self-associates to form an hexamer. At low tyrosine concentrations, homodimers can bind to certain recognition sequences referred to as 'strong TyrR boxes'. Homohexamers are the active repressing species, interacting with two or three tyrR boxes in the targeted regulatory DNA, including 'strong TyrR boxes' and lower-affinity sites called 'weak TyrR boxes'.

It localises to the cytoplasm. Binding of ATP strongly enhances the affinity of TyrR for tyrosine. Functionally, dual transcriptional regulator of the TyrR regulon, which includes a number of genes coding for proteins involved in the biosynthesis or transport of the three aromatic amino acids, phenylalanine, tyrosine and tryptophan. These three aromatic amino acids act as effectors which bind to the TyrR protein to form an active regulatory protein. Modulates the expression of at least eight unlinked transcription units, including aroF, aroG, aroLM, aroP, mtr, tyrA, tyrB and tyrP. In most cases TyrR acts as a repressor, but positive effects have been observed on the tyrP gene, which is repressed in the presence of tyrosine and activated at high phenylalanine concentrations. Is also involved in activation, but not repression, of mtr expression in association with phenylalanine or tyrosine. Acts by binding specifically to TyrR boxes in the promoter region of the target genes. The chain is HTH-type transcriptional regulatory protein TyrR from Escherichia coli (strain K12).